Here is a 784-residue protein sequence, read N- to C-terminus: MAAVAGAPGPGEGGESEQDSETIPGERRLGRLSCEPMEAELDSERRSLVRCEPCCGMEIDTQENAGPDIEQLGDSGAEQVYGIHTNSEFVSVSAVDYMGINQGQIAPENRKARSEQLPREPFLQRQPIPMILSEVTDSGIYTGLCLEEAKFSSNNGSEASLNYSECDNRSVGTTEGSVVTSGIDSLIPGSEVQVTLDHIIQDALVVSFCHGNRIFSGVLMDLSKRFGPHGIPVTVHPRREYKNKPVESIQEESKSFHEEPLVKSEENSPEDVTPIQQLENCKVQNLWTTKPPPLFHEGAPYPPPLFIRDTYNQSIPQPPPRKIKRPKKKIYREEPTSIMNAIKLRPRQVLCDKCKNNVVADKKEIRKVATDSYKTEEGKRRRHETVTTVNKKLKTDHKVNGKSQNESQKRTPITKVTNLAHGRGKVVKVPSQTSAAKTQMHTKEVLQNKNMDHVKAREVLKMAKEKAQKKQKVTTSSKNAHSKVHFTRRLQNSSSGTLPPRLRIKPQRYRNEENDSSLKPGLETLRSSKIGIKPQTRYSATRSAGETPSEIQSPSNGPEEISSEMQDTNVCVPPEEQDLQQTLGKRGSKSNITVYMTINQKKANSSSASVCSSDSTDDMKSSHSECSSTENFDFPPGSMHAPSSSSSSSASSKEEKKLSNSLKIKMFSKNVSKCVTPDGRTICVGDIVWAKIYGFPWWPARILAITVSRKDTGLLVRQEARISWFGSPTTSFLALSQLTPFLENFQSRFNKKRKGLYRKAITEAAKAAKQLTPEVRALLTQFET.

Disordered regions lie at residues 1–32 (MAAV…LGRL), 244–272 (KPVE…PEDV), 463–567 (AKEK…EMQD), and 605–654 (SSSA…SSKE). The segment covering 244–266 (KPVESIQEESKSFHEEPLVKSEE) has biased composition (basic and acidic residues). The span at 536–556 (TRYSATRSAGETPSEIQSPSN) shows a compositional bias: polar residues. Over residues 605 to 614 (SSSASVCSSD) the composition is skewed to low complexity. The PWWP domain maps to 684–744 (VGDIVWAKIY…LSQLTPFLEN (61 aa)).

Its subcellular location is the nucleus. Its function is as follows. H2A.Z-specific chromatin binding protein which plays an important role in the neural crest cell differentiation and/or migration during early development and is essential for the development of the head and eye. Acts as an adapter between distinct nucleosome components (H3K36me3 or H2A.Z) and chromatin-modifying complexes, contributing to the regulation of the levels of histone acetylation at actively transcribed genes. The chain is PWWP domain-containing protein 2A (pwwp2a) from Xenopus tropicalis (Western clawed frog).